We begin with the raw amino-acid sequence, 199 residues long: Neurotrophic factor BDNF precursor form (199 aa).

Positions 1–23 are disordered; it reads GQGSLAYPGLRTQGNLETLSGPN. A propeptide spanning residues 1–100 is cleaved from the precursor; that stretch reads GQGSLAYPGL…AANMSMRVRR (100 aa). The segment covering 12–23 has biased composition (polar residues); the sequence is TQGNLETLSGPN. N93 carries an N-linked (GlcNAc...) asparagine glycan. Cysteines 113 and 180 form a disulfide.

This sequence belongs to the NGF-beta family.

The protein resides in the secreted. Promotes the survival of neuronal populations that are all located either in the central nervous system or directly connected to it. The sequence is that of Neurotrophic factor BDNF precursor form (BDNF) from Morelia spilota (Carpet python).